The following is a 199-amino-acid chain: Putative lectin L633 (199 aa).

A signal peptide spans 1-25 (MNILLLLMLLTSIILLVILIFLAYN). Polar residues predominate over residues 35 to 48 (CITPAPESQSISPD). The segment at 35-74 (CITPAPESQSISPDQTTQLQTTTPVTSTPSNPTPTTIIPN) is disordered. Positions 49–73 (QTTQLQTTTPVTSTPSNPTPTTIIP) are enriched in low complexity. In terms of domain architecture, Bulb-type lectin spans 84–195 (EIVSNGDNVL…LGQELWCATR (112 aa)). Asn121 carries N-linked (GlcNAc...) asparagine; by host glycosylation.

It localises to the secreted. The polypeptide is Putative lectin L633 (Acanthamoeba polyphaga (Amoeba)).